The sequence spans 592 residues: Probable tubulin polyglutamylase TTLL2 (592 aa).

Disordered stretches follow at residues 1-23 and 51-77; these read MRGRDLCSSTQSQALGSLRTTTP and GVSIPPRRGRPTPTLEKKKKPHLMAED. Positions 7 to 23 are enriched in polar residues; it reads CSSTQSQALGSLRTTTP. The 344-residue stretch at 84-427 folds into the TTL domain; the sequence is LKPLVFRVDE…NGLRNEGREA (344 aa). ATP-binding positions include Lys-212, 218-219, 240-243, and 253-255; these read RG, QKYI, and KCD. Residue Arg-218 coordinates a protein. An L-glutamate-binding site is contributed by Arg-279. ATP is bound at residue 298 to 299; it reads TN. Residues Ser-301 and Lys-321 each coordinate L-glutamate. Mg(2+)-binding residues include Asp-373, Glu-386, and Asn-388. Position 404 (Lys-404) interacts with L-glutamate.

The protein belongs to the tubulin--tyrosine ligase family. Mg(2+) serves as cofactor. Testis.

Its function is as follows. Probable tubulin polyglutamylase that generates side chains of glutamate on the gamma-carboxyl group of specific glutamate residues within the C-terminal tail of target proteins. Similar to TTLL1, may acquire enzymatic activity only in complex with other proteins as it is most likely lacking domains important for autonomous activity. Probably involved in the side-chain initiation step of the polyglutamylation reaction rather than the elongation step. The protein is Probable tubulin polyglutamylase TTLL2 of Homo sapiens (Human).